Reading from the N-terminus, the 107-residue chain is UPF0145 protein BH1111 (107 aa).

This sequence belongs to the UPF0145 family.

The protein is UPF0145 protein BH1111 of Halalkalibacterium halodurans (strain ATCC BAA-125 / DSM 18197 / FERM 7344 / JCM 9153 / C-125) (Bacillus halodurans).